The sequence spans 227 residues: DNA repair protein RecO (227 aa).

Belongs to the RecO family.

Involved in DNA repair and RecF pathway recombination. In Pseudomonas putida (strain ATCC 47054 / DSM 6125 / CFBP 8728 / NCIMB 11950 / KT2440), this protein is DNA repair protein RecO.